A 686-amino-acid polypeptide reads, in one-letter code: tRNA 5-methylaminomethyl-2-thiouridine biosynthesis bifunctional protein MnmC (686 aa).

The tRNA (mnm(5)s(2)U34)-methyltransferase stretch occupies residues 1–258; sequence MPNIPLRVNS…RRALRRQQLD (258 aa). An FAD-dependent cmnm(5)s(2)U34 oxidoreductase region spans residues 276 to 686; sequence IGGGVASANL…MRKLIKGKAL (411 aa).

This sequence in the N-terminal section; belongs to the methyltransferase superfamily. tRNA (mnm(5)s(2)U34)-methyltransferase family. It in the C-terminal section; belongs to the DAO family. It depends on FAD as a cofactor.

It localises to the cytoplasm. It catalyses the reaction 5-aminomethyl-2-thiouridine(34) in tRNA + S-adenosyl-L-methionine = 5-methylaminomethyl-2-thiouridine(34) in tRNA + S-adenosyl-L-homocysteine + H(+). Its function is as follows. Catalyzes the last two steps in the biosynthesis of 5-methylaminomethyl-2-thiouridine (mnm(5)s(2)U) at the wobble position (U34) in tRNA. Catalyzes the FAD-dependent demodification of cmnm(5)s(2)U34 to nm(5)s(2)U34, followed by the transfer of a methyl group from S-adenosyl-L-methionine to nm(5)s(2)U34, to form mnm(5)s(2)U34. The protein is tRNA 5-methylaminomethyl-2-thiouridine biosynthesis bifunctional protein MnmC of Shewanella loihica (strain ATCC BAA-1088 / PV-4).